Here is a 189-residue protein sequence, read N- to C-terminus: GTPase NRas (189 aa).

GTP contacts are provided by residues 10–18 (GAGGVGKSA) and 29–30 (VD). The Effector region motif lies at 32-40 (YDPTIEDSY). 57–61 (DTAGQ) is a binding site for GTP. Position 89 is a phosphoserine (Ser89). 116 to 119 (NKCD) is a binding site for GTP. The hypervariable region stretch occupies residues 166-185 (YRMKKLNSSDDGTQGCMGLP). Lys170 participates in a covalent cross-link: Glycyl lysine isopeptide (Lys-Gly) (interchain with G-Cter in ubiquitin). Cys181 is lipidated: S-palmitoyl cysteine. Residue Cys186 is the site of S-farnesyl cysteine attachment. A propeptide spans 187 to 189 (VVM) (removed in mature form).

Belongs to the small GTPase superfamily. Ras family. As to quaternary structure, interacts (active GTP-bound form preferentially) with RGS14. Interacts (active GTP-bound form) with RASSF7. Interacts (active GTP-bound form) with both SHOC2 and PP1c (all isoforms) to form a tertiary complex; SHOC2 and PP1c preferably bind M-Ras/MRAS, but they also bind K-Ras/KRAS, N-Ras/NRAS and H-Ras/HRAS. Post-translationally, palmitoylated by the ZDHHC9-GOLGA7 complex. Depalmitoylated by ABHD17A, ABHD17B and ABHD17C. A continuous cycle of de- and re-palmitoylation regulates rapid exchange between plasma membrane and Golgi. In terms of processing, acetylation at Lys-104 prevents interaction with guanine nucleotide exchange factors (GEFs). Ubiquitinated by the BCR(LZTR1) E3 ubiquitin ligase complex at Lys-170 in a non-degradative manner, leading to inhibit Ras signaling by decreasing Ras association with membranes. Post-translationally, phosphorylation at Ser-89 enhances NRAS association with its downstream effectors.

Its subcellular location is the cell membrane. The protein localises to the golgi apparatus membrane. It carries out the reaction GTP + H2O = GDP + phosphate + H(+). Alternates between an inactive form bound to GDP and an active form bound to GTP. Activated by a guanine nucleotide-exchange factor (GEF) and inactivated by a GTPase-activating protein (GAP). In terms of biological role, ras proteins bind GDP/GTP and possess intrinsic GTPase activity. The protein is GTPase NRas (NRAS) of Pongo abelii (Sumatran orangutan).